A 188-amino-acid chain; its full sequence is dCTP deaminase (188 aa).

Residues 111-116 (KSTYAR), 135-137 (TLE), glutamine 156, tyrosine 170, lysine 179, and glutamine 180 each bind dCTP. The active-site Proton donor/acceptor is glutamate 137.

The protein belongs to the dCTP deaminase family. In terms of assembly, homotrimer.

It carries out the reaction dCTP + H2O + H(+) = dUTP + NH4(+). It functions in the pathway pyrimidine metabolism; dUMP biosynthesis; dUMP from dCTP (dUTP route): step 1/2. Catalyzes the deamination of dCTP to dUTP. This chain is dCTP deaminase, found in Rickettsia bellii (strain OSU 85-389).